We begin with the raw amino-acid sequence, 66 residues long: Probable Sec-independent protein translocase protein TatE (66 aa).

A helical transmembrane segment spans residues 1-21 (MEGISITKLLVIAVLIVLLFG). Residues 46-66 (ETPAAKKSDGAEAAPRVENKE) form a disordered region.

Belongs to the TatA/E family. TatE subfamily.

Its subcellular location is the cell inner membrane. In terms of biological role, part of the twin-arginine translocation (Tat) system that transports large folded proteins containing a characteristic twin-arginine motif in their signal peptide across membranes. TatE shares overlapping functions with TatA. This chain is Probable Sec-independent protein translocase protein TatE, found in Edwardsiella piscicida.